Consider the following 350-residue polypeptide: RNA 3'-terminal phosphate cyclase (350 aa).

ATP contacts are provided by residues glutamine 107 and 290–294 (FLGDQ). Catalysis depends on histidine 316, which acts as the Tele-AMP-histidine intermediate.

The protein belongs to the RNA 3'-terminal cyclase family. Type 1 subfamily.

It is found in the cytoplasm. It carries out the reaction a 3'-end 3'-phospho-ribonucleotide-RNA + ATP = a 3'-end 2',3'-cyclophospho-ribonucleotide-RNA + AMP + diphosphate. Catalyzes the conversion of 3'-phosphate to a 2',3'-cyclic phosphodiester at the end of RNA. The mechanism of action of the enzyme occurs in 3 steps: (A) adenylation of the enzyme by ATP; (B) transfer of adenylate to an RNA-N3'P to produce RNA-N3'PP5'A; (C) and attack of the adjacent 2'-hydroxyl on the 3'-phosphorus in the diester linkage to produce the cyclic end product. The biological role of this enzyme is unknown but it is likely to function in some aspects of cellular RNA processing. The protein is RNA 3'-terminal phosphate cyclase of Gloeothece citriformis (strain PCC 7424) (Cyanothece sp. (strain PCC 7424)).